The primary structure comprises 478 residues: Antiviral innate immune response effector IFIT1 (478 aa).

TPR repeat units lie at residues 52–85 (VGIH…MQKE), 95–128 (LVTW…CKKP), 139–174 (PEID…DHEN), 183–216 (ISAY…NPDN), 218–249 (YLKV…NMSS), and 251–284 (TYVF…TPTS). Position 147 (tryptophan 147) interacts with mRNA. Glycine 190 provides a ligand contact to RNA. Lysine 259, histidine 289, glutamine 290, and lysine 336 together coordinate RNA. 4 TPR repeats span residues 305 to 339 (ATKG…KPTF), 340 to 373 (EVAH…KPVV), 378 to 412 (QDIH…EQTS), and 437 to 470 (LESL…AADF).

Belongs to the IFIT family. In terms of assembly, component of an interferon-dependent multiprotein complex, at least composed of IFIT1, IFIT2 and IFIT3. Interacts (via TPR repeats 1-4) with RPL15. Interacts with STING1/MITA; could disrupt STING1 interaction with MAVS or TBK1, acting as a negative-feedback regulator of virus-triggered signaling. Interacts with EIF3E; this could be an alternative way to inhibit translation. Phosphorylated. Post-translationally, ISGylated.

The protein resides in the cytoplasm. Its function is as follows. Plays a key role in the innate immune response as part of an interferon-dependent multiprotein complex, recognizing and sequestering viral RNAs that lack host-specific 2'-O-methylation at their 5' cap. By distinguishing these RNAs from host mRNAs, inhibits their translation by competing with the translation initiation factor eIF4E. Could also prevent viral replication through its interaction with DNA replication origin-binding protein E1 of several viruses. Causes the translocation of E1 from the nucleus to the cytoplasm and can also inhibit its helicase activity in vitro. This is Antiviral innate immune response effector IFIT1 from Macaca fascicularis (Crab-eating macaque).